The sequence spans 354 residues: Alkanal monooxygenase alpha chain (354 aa).

The protein belongs to the bacterial luciferase oxidoreductase family. In terms of assembly, heterodimer of an alpha and a beta chain.

The enzyme catalyses a long-chain fatty aldehyde + FMNH2 + O2 = a long-chain fatty acid + hnu + FMN + H2O + 2 H(+). Light-emitting reaction in luminous bacteria. This chain is Alkanal monooxygenase alpha chain (luxA), found in Aliivibrio fischeri (Vibrio fischeri).